The following is a 199-amino-acid chain: GTP cyclohydrolase-2 (199 aa).

49–53 (RIHSE) lines the GTP pocket. Zn(2+) is bound by residues Cys54, Cys65, and Cys67. GTP contacts are provided by residues Gln70, 92–94 (EGR), and Thr114. Asp126 (proton acceptor) is an active-site residue. Arg128 (nucleophile) is an active-site residue. Residues Thr149 and Lys154 each contribute to the GTP site.

It belongs to the GTP cyclohydrolase II family. Homodimer. The cofactor is Zn(2+).

It carries out the reaction GTP + 4 H2O = 2,5-diamino-6-hydroxy-4-(5-phosphoribosylamino)-pyrimidine + formate + 2 phosphate + 3 H(+). It functions in the pathway cofactor biosynthesis; riboflavin biosynthesis; 5-amino-6-(D-ribitylamino)uracil from GTP: step 1/4. Functionally, catalyzes the conversion of GTP to 2,5-diamino-6-ribosylamino-4(3H)-pyrimidinone 5'-phosphate (DARP), formate and pyrophosphate. This is GTP cyclohydrolase-2 from Blochmanniella pennsylvanica (strain BPEN).